The sequence spans 549 residues: Frizzled/smoothened-like sans CRD protein A (549 aa).

Positions 1–22 are cleaved as a signal peptide; it reads MKFNFKLILIILIINQILIINC. Residues 23-89 are Extracellular-facing; the sequence is KENKILEIYK…EVNTLSLMIK (67 aa). A glycan (N-linked (GlcNAc...) asparagine) is linked at Asn63. The chain crosses the membrane as a helical span at residues 90–110; sequence ITGTISFIASLILLLIYSPLI. Residues 111–119 are Cytoplasmic-facing; sequence NRMGYNRHT. The chain crosses the membrane as a helical span at residues 120–140; it reads IGIFFLTFSVFLIMLTDIIYV. Residues 141 to 162 are Extracellular-facing; the sequence is HHGNDLICPQSHRYSRQNDSGC. An N-linked (GlcNAc...) asparagine glycan is attached at Asn158. A helical transmembrane segment spans residues 163–183; the sequence is TITGILFQYGCIAAVLFWATL. The Cytoplasmic portion of the chain corresponds to 184-198; it reads SLDLYLTLKKISTKK. The chain crosses the membrane as a helical span at residues 199 to 219; that stretch reads VEKWYLIILTLIALILTFVPL. The Extracellular portion of the chain corresponds to 220–241; it reads VKKSYGYLVTGLACWILDSTDQ. A helical membrane pass occupies residues 242-262; sequence IIFFWAPFTAILGIGSILIVL. At 263-287 the chain is on the cytoplasmic side; the sequence is VVYEIYKISKITKQNRGIFQSHIRP. The chain crosses the membrane as a helical span at residues 288 to 308; that stretch reads LLMVLFIFGQFLFILAFNALI. Over 309 to 346 the chain is Extracellular; the sequence is NNKYDEYSARMDSYIDCLFSSSSYSYLCRLKTFPFEME. Residues 347 to 367 traverse the membrane as a helical segment; sequence FIVLFFLRLIGIEVLIFYGFT. Topologically, residues 368–549 are cytoplasmic; that stretch reads QQTKKILLHS…NNNSNNDENN (182 aa). 2 stretches are compositionally biased toward low complexity: residues 417 to 474 and 536 to 549; these read NNNN…SQQN and NKNI…DENN. 2 disordered regions span residues 417–483 and 528–549; these read NNNN…QKLS and QYEE…DENN. The stretch at 432–475 forms a coiled coil; it reads NNLNNNLNNNNLNNNNNLNNLNNLNINNNLKNSQNNLNNSQQNE.

It belongs to the G-protein coupled receptor Fz/Smo family.

It localises to the membrane. In Dictyostelium discoideum (Social amoeba), this protein is Frizzled/smoothened-like sans CRD protein A (fscA).